The sequence spans 260 residues: Global transcriptional regulator CodY (260 aa).

Residues 1–159 (MPNLLEKTRK…SSTVVGIQLL (159 aa)) form a GAF domain region. Positions 207 to 226 (ASVIADRIGITRSVIVNALR) form a DNA-binding region, H-T-H motif.

The protein belongs to the CodY family.

It is found in the cytoplasm. Its function is as follows. DNA-binding global transcriptional regulator which is involved in the adaptive response to starvation and acts by directly or indirectly controlling the expression of numerous genes in response to nutrient availability. During rapid exponential growth, CodY is highly active and represses genes whose products allow adaptation to nutrient depletion. The chain is Global transcriptional regulator CodY from Streptococcus equi subsp. equi (strain 4047).